A 273-amino-acid chain; its full sequence is Shikimate dehydrogenase (NADP(+)) (273 aa).

Shikimate is bound by residues 18-20 (SKS) and T65. Residue K69 is the Proton acceptor of the active site. An NADP(+)-binding site is contributed by E81. Residues N90 and D105 each contribute to the shikimate site. Residues 130-134 (GAGGA), 154-159 (NRTHSK), and M217 each bind NADP(+). Shikimate is bound at residue Y219. G240 provides a ligand contact to NADP(+).

Belongs to the shikimate dehydrogenase family. In terms of assembly, homodimer.

The catalysed reaction is shikimate + NADP(+) = 3-dehydroshikimate + NADPH + H(+). It functions in the pathway metabolic intermediate biosynthesis; chorismate biosynthesis; chorismate from D-erythrose 4-phosphate and phosphoenolpyruvate: step 4/7. In terms of biological role, involved in the biosynthesis of the chorismate, which leads to the biosynthesis of aromatic amino acids. Catalyzes the reversible NADPH linked reduction of 3-dehydroshikimate (DHSA) to yield shikimate (SA). This is Shikimate dehydrogenase (NADP(+)) from Janthinobacterium sp. (strain Marseille) (Minibacterium massiliensis).